Reading from the N-terminus, the 1700-residue chain is Rho guanine nucleotide exchange factor 28 (1700 aa).

A disordered region spans residues 288–335 (TERATMPSGAAETEEEVRNLESGRSPSEEEEDGQLVKSQADGPSEQED). Phosphoserine occurs at positions 312, 314, and 478. Residues 483-525 (VADSEEEGRSEPPICYAVGSQSSPRTGLPGGDELDSFDANTEP) form a disordered region. The residue at position 623 (Ser-623) is a Phosphoserine. Residues 651 to 698 (RHQFVPGTFSGVLQCSGCDKTLLGKESLQCANCKANTHKGCKDTVPPC) form a Phorbol-ester/DAG-type zinc finger. The span at 709–720 (NKPQTILGSSSV) shows a compositional bias: polar residues. 2 disordered regions span residues 709-761 (NKPQ…VPGT) and 774-799 (ESEG…GSSP). Residues 728–737 (LSLHPSPSMP) show a composition bias toward low complexity. Residues 774–783 (ESEGDSNSWR) are compositionally biased toward polar residues. In terms of domain architecture, DH spans 848-1043 (KRQDVIFELM…KDMIAAVDLK (196 aa)). The PH domain maps to 1085–1187 (ALLHDGLVYW…WMRRIQQAVE (103 aa)). The tract at residues 1186 to 1207 (VESCPEEEGGRTSESDEERRKA) is disordered. Residues 1193–1207 (EGGRTSESDEERRKA) show a composition bias toward basic and acidic residues. An interaction with PTK2/FAK1; required for regulation of axonal branching and synapse formation region spans residues 1294-1303 (DVSQPSEEGP). The tract at residues 1369–1380 (IIQAIQNLTRLL) is mediates cytoplasmic retention and interaction with YWHAH. An interaction with microtubules region spans residues 1421 to 1700 (QEKSRYLEKH…DGAEENIVYL (280 aa)). Residues 1473 to 1522 (ERECQSQEELLLRHRSELDHQLQEYQQNLERLREGQRMVERERQRMRDQQ) adopt a coiled-coil conformation. The interval 1493–1524 (QLQEYQQNLERLREGQRMVERERQRMRDQQGL) is RNA-binding. Phosphoserine is present on Ser-1535. The mediates cytoplasmic retention and interaction with MAPK8IP1 stretch occupies residues 1563 to 1576 (FLNDAFTHMSLNTS). Residues 1574–1598 (NTSNKPNPSGAPWDAHPPGGSHLDL) are disordered. Ser-1604 is modified (phosphoserine). Residues 1612-1700 (VSQPSDVNSE…DGAEENIVYL (89 aa)) form a disordered region. The segment covering 1613–1623 (SQPSDVNSELW) has biased composition (polar residues). Residues 1633 to 1642 (ARQESIKDSC) show a composition bias toward basic and acidic residues. Polar residues predominate over residues 1647 to 1672 (DLNSFQTESPDPQDSNQRGPQPQTLI).

Homooligomer; forms cytoplasmic aggregates. Forms a complex with MAPK8 and MAPK8IP1. Interacts with RHOA. Interacts with microtubules. Interacts with YWHAE and YWHAH. Interacts with PTK2/FAK1. Interacts with NEFL. Interacts with CTNND2; prevents interaction with RHOA. In terms of processing, phosphorylated on tyrosine upon stimulation of cells by laminin.

The protein localises to the cytoplasm. It localises to the cell membrane. Its function is as follows. Functions as a RHOA-specific guanine nucleotide exchange factor regulating signaling pathways downstream of integrins and growth factor receptors. Functions in axonal branching, synapse formation and dendritic morphogenesis. Also functions in focal adhesion formation, cell motility and B-lymphocytes activation. May regulate NEFL expression and aggregation and play a role in apoptosis. This Rattus norvegicus (Rat) protein is Rho guanine nucleotide exchange factor 28 (Arhgef28).